Here is a 293-residue protein sequence, read N- to C-terminus: Protein BOBBER 2 (293 aa).

N-acetylalanine is present on Ala2. Positions 50–80 (EKEIVAAVMAAKQRLREAEKKKLEKESVKSM) form a coiled coil. Composition is skewed to basic and acidic residues over residues 67-102 (AEKKKLEKESVKSMEVEKPKKDSLKPTELEKPKEES) and 110-120 (EIEKPKEEKES). Residues 67–125 (AEKKKLEKESVKSMEVEKPKKDSLKPTELEKPKEESLMATDPMEIEKPKEEKESGPIVP) are disordered. The CS domain occupies 131–220 (LDFEKYSWGQ…DQMEWWKYCV (90 aa)).

It localises to the cytoplasm. The protein resides in the cytoplasmic granule. Its function is as follows. Small heat shock protein required for the establishment of auxin gradients and for patterning of the apical domain of the embryo. Involved in the specification of the cotyledon primordia. Also required for normal inflorescence and floral meristem function, normal developmental patterning and thermotolerance. Acts as a molecular chaperone. The sequence is that of Protein BOBBER 2 (BOB2) from Arabidopsis thaliana (Mouse-ear cress).